Here is a 372-residue protein sequence, read N- to C-terminus: Lipoyl synthase (372 aa).

7 residues coordinate [4Fe-4S] cluster: Cys-37, Cys-42, Cys-48, Cys-63, Cys-67, Cys-70, and Ser-292. The region spanning 49–281 is the Radical SAM core domain; that stretch reads WREGTATVML…ERAALEMGFL (233 aa). Positions 338-372 are disordered; that stretch reads LTAELDPDEPRPPVAPAPASASPARLVPAASLIRR. Residues 354 to 372 show a composition bias toward low complexity; sequence APASASPARLVPAASLIRR.

The protein belongs to the radical SAM superfamily. Lipoyl synthase family. [4Fe-4S] cluster serves as cofactor.

It is found in the cytoplasm. It carries out the reaction [[Fe-S] cluster scaffold protein carrying a second [4Fe-4S](2+) cluster] + N(6)-octanoyl-L-lysyl-[protein] + 2 oxidized [2Fe-2S]-[ferredoxin] + 2 S-adenosyl-L-methionine + 4 H(+) = [[Fe-S] cluster scaffold protein] + N(6)-[(R)-dihydrolipoyl]-L-lysyl-[protein] + 4 Fe(3+) + 2 hydrogen sulfide + 2 5'-deoxyadenosine + 2 L-methionine + 2 reduced [2Fe-2S]-[ferredoxin]. It functions in the pathway protein modification; protein lipoylation via endogenous pathway; protein N(6)-(lipoyl)lysine from octanoyl-[acyl-carrier-protein]: step 2/2. In terms of biological role, catalyzes the radical-mediated insertion of two sulfur atoms into the C-6 and C-8 positions of the octanoyl moiety bound to the lipoyl domains of lipoate-dependent enzymes, thereby converting the octanoylated domains into lipoylated derivatives. The chain is Lipoyl synthase from Sorangium cellulosum (strain So ce56) (Polyangium cellulosum (strain So ce56)).